A 202-amino-acid chain; its full sequence is Histone chaperone ASF1B (202 aa).

An interaction with histone H3 and CHAF1B region spans residues 1–156 (MAKVSVLNVA…TRFHINWDNN (156 aa)). Residue S198 is modified to Phosphoserine; by TLK2.

The protein belongs to the ASF1 family. Interacts with histone H3 (via C-terminus), including histone H3.1, H3.2 and H3.3, and histone H4; the interaction with H3 is direct. Interacts with the CHAF1A, CHAF1B and RBBP4 subunits of the CAF-1 complex. Interacts with HAT1, NASP and TAF1. Found in a soluble complex with NASP and histones H3 and H4; the interaction with NASP is probably indirect and mediated by H3-H4. Interacts with CDAN1. Found in a cytosolic complex with CDAN1, ASF1A, IPO4 and histones H3.1 and H4. Interacts with CREBBP. In terms of processing, phosphorylated by TLK2. Phosphorylated by TLK1. Highly expressed in germ cells. Restricted to premeiotic to meiotic stages during spermatogenesis.

The protein localises to the nucleus. The protein resides in the cytoplasm. Its subcellular location is the cytosol. Histone chaperone that facilitates histone deposition and histone exchange and removal during nucleosome assembly and disassembly. Cooperates with chromatin assembly factor 1 (CAF-1) to promote replication-dependent chromatin assembly. Also involved in the nuclear import of the histone H3-H4 dimer together with importin-4 (IPO4): specifically recognizes and binds newly synthesized histones with the monomethylation of H3 'Lys-9' (H3K9me1) and diacetylation at 'Lys-5' and 'Lys-12' of H4 (H4K5ac and H4K12ac) marks in the cytosol. Does not participate in replication-independent nucleosome deposition which is mediated by ASF1A and HIRA. Required for gonad development. This chain is Histone chaperone ASF1B, found in Mus musculus (Mouse).